Consider the following 161-residue polypeptide: Large ribosomal subunit protein uL11 (161 aa).

Belongs to the universal ribosomal protein uL11 family. In terms of assembly, part of the ribosomal stalk of the 50S ribosomal subunit. Interacts with L10 and the large rRNA to form the base of the stalk. L10 forms an elongated spine to which L12 dimers bind in a sequential fashion forming a multimeric L10(L12)X complex.

Functionally, forms part of the ribosomal stalk which helps the ribosome interact with GTP-bound translation factors. This Methanocaldococcus jannaschii (strain ATCC 43067 / DSM 2661 / JAL-1 / JCM 10045 / NBRC 100440) (Methanococcus jannaschii) protein is Large ribosomal subunit protein uL11.